Here is a 557-residue protein sequence, read N- to C-terminus: Formate--tetrahydrofolate ligase (557 aa).

An ATP-binding site is contributed by 65–72 (TPAGEGKT).

It belongs to the formate--tetrahydrofolate ligase family.

It catalyses the reaction (6S)-5,6,7,8-tetrahydrofolate + formate + ATP = (6R)-10-formyltetrahydrofolate + ADP + phosphate. It participates in one-carbon metabolism; tetrahydrofolate interconversion. This Methylorubrum populi (strain ATCC BAA-705 / NCIMB 13946 / BJ001) (Methylobacterium populi) protein is Formate--tetrahydrofolate ligase.